The following is a 181-amino-acid chain: Aminoglycoside 2'-N-acetyltransferase (181 aa).

The region spanning 11-162 (VHTADLDSET…DGTVFVLPID (152 aa)) is the N-acetyltransferase domain. Substrate-binding positions include aspartate 35 and 82-83 (EG). CoA is bound by residues 84–86 (VAV) and 91–96 (RGQRLV). Substrate is bound by residues serine 117 and 151 to 152 (DD).

This sequence belongs to the AAC(2')-I acetyltransferase family. Homodimer.

In terms of biological role, catalyzes the coenzyme A-dependent acetylation of the 2' hydroxyl or amino group of a broad spectrum of aminoglycosides. It confers resistance to aminoglycosides. The chain is Aminoglycoside 2'-N-acetyltransferase (aac) from Mycobacterium bovis (strain ATCC BAA-935 / AF2122/97).